The primary structure comprises 559 residues: Hepatocyte nuclear factor 1-alpha (559 aa).

Residues 13-44 (GPGRLSALQEQLIWALLGSGLSREVLVHALGE) form the HNF-p1 domain. Positions 14–43 (PGRLSALQEQLIWALLGSGLSREVLVHALG) are dimerization. Residues 49–62 (RVTPGAEKGDRGDG) are compositionally biased toward basic and acidic residues. The tract at residues 49–73 (RVTPGAEKGDRGDGESSEEGEMDFP) is disordered. The 96-residue stretch at 78 to 173 (QELEALAPEE…ISQQFTNARH (96 aa)) folds into the POU-specific atypical domain. 6 interaction with DNA regions span residues 121–123 (QRE), 134–140 (HLSQHLN), 146–149 (KNQK), 192–195 (RFKW), 252–254 (RVY), and 259–262 (NRRK). The Nuclear localization signal signature appears at 186–194 (RKGRRNRFK). The homeobox; HNF1-type DNA-binding region spans 188–268 (GRRNRFKWGP…NRRKEEAFRH (81 aa)). The segment at 492–559 (TDPEEQTDQP…IPAQMVSTAQ (68 aa)) is disordered. The span at 499 to 522 (DQPIQEDSLHLQSPSPVPVSSGNL) shows a compositional bias: polar residues.

It belongs to the HNF1 homeobox family. As to quaternary structure, binds DNA as a dimer. As to expression, expressed in liver, intestine, spleen and kidney.

It localises to the nucleus. Its function is as follows. Transcriptional activator that regulates the tissue specific expression of multiple genes, especially in pancreas and liver. Binds to the promoter of the albumin gene. In Salmo salar (Atlantic salmon), this protein is Hepatocyte nuclear factor 1-alpha (hnf1a).